The sequence spans 323 residues: Acetyl esterase (323 aa).

Residues 91-93 carry the Involved in the stabilization of the negatively charged intermediate by the formation of the oxyanion hole motif; sequence HGG. Residues serine 165, aspartate 262, and histidine 292 contribute to the active site.

It belongs to the 'GDXG' lipolytic enzyme family. Homodimer. Interacts with MalT and MelA.

The protein localises to the cytoplasm. Its function is as follows. Displays esterase activity towards short chain fatty esters (acyl chain length of up to 8 carbons). Able to hydrolyze triacetylglycerol (triacetin) and tributyrylglycerol (tributyrin), but not trioleylglycerol (triolein) or cholesterol oleate. Negatively regulates MalT activity by antagonizing maltotriose binding. Inhibits MelA galactosidase activity. This is Acetyl esterase from Salmonella choleraesuis (strain SC-B67).